The following is a 154-amino-acid chain: Ribonuclease H (154 aa).

The region spanning 1–141 (MKRIEAYTDG…ADELARAGME (141 aa)) is the RNase H type-1 domain. Positions 9, 47, 69, and 133 each coordinate Mg(2+).

It belongs to the RNase H family. As to quaternary structure, monomer. Mg(2+) is required as a cofactor.

It localises to the cytoplasm. The enzyme catalyses Endonucleolytic cleavage to 5'-phosphomonoester.. Functionally, endonuclease that specifically degrades the RNA of RNA-DNA hybrids. The chain is Ribonuclease H from Brucella abortus (strain 2308).